A 442-amino-acid polypeptide reads, in one-letter code: Probable diguanylate cyclase DgcI (442 aa).

Residues 1 to 23 (MSRINKFVLTVSLLIFIMISAVA) form the signal peptide. The N-palmitoyl cysteine moiety is linked to residue C24. The S-diacylglycerol cysteine moiety is linked to residue C24. A helical transmembrane segment spans residues 231–251 (LIIFFAALVAVISGASCLYLV). The GGDEF domain maps to 319–442 (KGGYLCLFDV…KNGRAQISWQ (124 aa)). D327 is a Mg(2+) binding site. Substrate is bound by residues N335, H340, and D344. D371 is a binding site for Mg(2+).

Homodimer. The cofactor is Mg(2+).

Its subcellular location is the cell membrane. The catalysed reaction is 2 GTP = 3',3'-c-di-GMP + 2 diphosphate. The protein operates within purine metabolism; 3',5'-cyclic di-GMP biosynthesis. Catalyzes the synthesis of cyclic-di-GMP (c-di-GMP) via the condensation of 2 GTP molecules. The chain is Probable diguanylate cyclase DgcI from Escherichia coli (strain K12).